Here is a 259-residue protein sequence, read N- to C-terminus: tRNA (guanine-N(7)-)-methyltransferase (259 aa).

Positions 1–11 (MSNTDNSDKNT) are enriched in basic and acidic residues. A disordered region spans residues 1-29 (MSNTDNSDKNTKPTGYRPPQTDFNTEFGN). S-adenosyl-L-methionine-binding residues include E89, E114, D141, and D164. The active site involves D164. Residues K168, D200, and 238–241 (TKFE) each bind substrate.

It belongs to the class I-like SAM-binding methyltransferase superfamily. TrmB family.

The catalysed reaction is guanosine(46) in tRNA + S-adenosyl-L-methionine = N(7)-methylguanosine(46) in tRNA + S-adenosyl-L-homocysteine. It functions in the pathway tRNA modification; N(7)-methylguanine-tRNA biosynthesis. Catalyzes the formation of N(7)-methylguanine at position 46 (m7G46) in tRNA. The polypeptide is tRNA (guanine-N(7)-)-methyltransferase (Corynebacterium diphtheriae (strain ATCC 700971 / NCTC 13129 / Biotype gravis)).